Consider the following 375-residue polypeptide: 23S rRNA (uracil(747)-C(5))-methyltransferase RlmC (375 aa).

Cys-3, Cys-11, Cys-14, and Cys-87 together coordinate [4Fe-4S] cluster. S-adenosyl-L-methionine-binding residues include Gln-212, Phe-241, Glu-262, and Asn-307. The active-site Nucleophile is the Cys-334.

Belongs to the class I-like SAM-binding methyltransferase superfamily. RNA M5U methyltransferase family. RlmC subfamily.

The catalysed reaction is uridine(747) in 23S rRNA + S-adenosyl-L-methionine = 5-methyluridine(747) in 23S rRNA + S-adenosyl-L-homocysteine + H(+). Functionally, catalyzes the formation of 5-methyl-uridine at position 747 (m5U747) in 23S rRNA. In Escherichia coli O17:K52:H18 (strain UMN026 / ExPEC), this protein is 23S rRNA (uracil(747)-C(5))-methyltransferase RlmC.